Reading from the N-terminus, the 402-residue chain is Dual-specificity RNA methyltransferase RlmN (402 aa).

Catalysis depends on E94, which acts as the Proton acceptor. The Radical SAM core domain occupies 100–351 (EDDRGTLCIS…ATVRKTRGDD (252 aa)). An intrachain disulfide couples C107 to C356. C114, C118, and C121 together coordinate [4Fe-4S] cluster. S-adenosyl-L-methionine contacts are provided by residues 182–183 (GE), S214, 236–238 (SLH), and N313. The S-methylcysteine intermediate role is filled by C356.

It belongs to the radical SAM superfamily. RlmN family. It depends on [4Fe-4S] cluster as a cofactor.

It localises to the cytoplasm. It catalyses the reaction adenosine(2503) in 23S rRNA + 2 reduced [2Fe-2S]-[ferredoxin] + 2 S-adenosyl-L-methionine = 2-methyladenosine(2503) in 23S rRNA + 5'-deoxyadenosine + L-methionine + 2 oxidized [2Fe-2S]-[ferredoxin] + S-adenosyl-L-homocysteine. The catalysed reaction is adenosine(37) in tRNA + 2 reduced [2Fe-2S]-[ferredoxin] + 2 S-adenosyl-L-methionine = 2-methyladenosine(37) in tRNA + 5'-deoxyadenosine + L-methionine + 2 oxidized [2Fe-2S]-[ferredoxin] + S-adenosyl-L-homocysteine. Functionally, specifically methylates position 2 of adenine 2503 in 23S rRNA and position 2 of adenine 37 in tRNAs. m2A2503 modification seems to play a crucial role in the proofreading step occurring at the peptidyl transferase center and thus would serve to optimize ribosomal fidelity. The polypeptide is Dual-specificity RNA methyltransferase RlmN (Polynucleobacter asymbioticus (strain DSM 18221 / CIP 109841 / QLW-P1DMWA-1) (Polynucleobacter necessarius subsp. asymbioticus)).